Consider the following 89-residue polypeptide: Small ribosomal subunit protein uS15 (89 aa).

It belongs to the universal ribosomal protein uS15 family. Part of the 30S ribosomal subunit. Forms a bridge to the 50S subunit in the 70S ribosome, contacting the 23S rRNA.

Functionally, one of the primary rRNA binding proteins, it binds directly to 16S rRNA where it helps nucleate assembly of the platform of the 30S subunit by binding and bridging several RNA helices of the 16S rRNA. In terms of biological role, forms an intersubunit bridge (bridge B4) with the 23S rRNA of the 50S subunit in the ribosome. The chain is Small ribosomal subunit protein uS15 from Cellvibrio japonicus (strain Ueda107) (Pseudomonas fluorescens subsp. cellulosa).